The chain runs to 330 residues: MSIEIRNINKQFGQFRALNEINLSIHSGELVALLGPSGCGKTTLLRIIAGLEQPDSGSIIFHGQDVSVHDVRKRNVGFVFQHYALFRHMTVFDNVAFGLRMKPKNIRPSKSDIEKKVHELLNLVQLDWLGDRYPEQLSGGQRQRIALARALIVEPSILLLDEPFGALDAKVRKELRRWLSQLHEDIDLTSVFVTHDQEEAMEVADRIVLMNKGVIEQIGTPAEVYNHPASEFVYHFLGDSNRLKVAQTEETILFRPHEVSLSVQAQDGYQAVTVRDIRPLGALTRLSLKLGEQSELIEAEVAKDDVSLEGLQKGDVIQFKPKRYNHDWEI.

In terms of domain architecture, ABC transporter spans Ile3–Leu237. Residue Gly35–Thr42 coordinates ATP.

Belongs to the ABC transporter superfamily. Sulfate/tungstate importer (TC 3.A.1.6) family. In terms of assembly, the complex is composed of two ATP-binding proteins (CysA), two transmembrane proteins (CysT and CysW) and a solute-binding protein (CysP).

The protein localises to the cell inner membrane. It carries out the reaction sulfate(out) + ATP + H2O = sulfate(in) + ADP + phosphate + H(+). It catalyses the reaction thiosulfate(out) + ATP + H2O = thiosulfate(in) + ADP + phosphate + H(+). Part of the ABC transporter complex CysAWTP involved in sulfate/thiosulfate import. Responsible for energy coupling to the transport system. The sequence is that of Sulfate/thiosulfate import ATP-binding protein CysA from Pectobacterium atrosepticum (strain SCRI 1043 / ATCC BAA-672) (Erwinia carotovora subsp. atroseptica).